A 462-amino-acid polypeptide reads, in one-letter code: Chitinase 1 (462 aa).

The signal sequence occupies residues 1-17; sequence MILNLIILLAISIVASA. The GH18 domain maps to 18-291; the sequence is SNIAAYWGQN…NQLHQALSGS (274 aa). A glycan (N-linked (GlcNAc...) asparagine) is linked at asparagine 57. Glutamate 147 acts as the Proton donor in catalysis.

It belongs to the glycosyl hydrolase 18 family. Chitinase class V subfamily.

It localises to the secreted. It catalyses the reaction Random endo-hydrolysis of N-acetyl-beta-D-glucosaminide (1-&gt;4)-beta-linkages in chitin and chitodextrins.. Functionally, chitinase involved in the remodeling of chitin in the fungal cell wall. Plays a role in cell separation. This Candida albicans (strain SC5314 / ATCC MYA-2876) (Yeast) protein is Chitinase 1 (CHT1).